The sequence spans 346 residues: [LysW]-lysine/[LysW]-ornithine hydrolase (346 aa).

Zn(2+) is bound at residue His67. Asp69 is an active-site residue. Asp91 contributes to the Zn(2+) binding site. Glu121 (proton acceptor) is an active-site residue. Zn(2+) contacts are provided by Glu122, Glu145, and His316.

It belongs to the peptidase M20A family. LysK subfamily. Requires Zn(2+) as cofactor. Co(2+) is required as a cofactor.

It is found in the cytoplasm. It carries out the reaction [amino-group carrier protein]-C-terminal-gamma-(L-lysyl)-L-glutamate + H2O = [amino-group carrier protein]-C-terminal-L-glutamate + L-lysine. It catalyses the reaction [amino-group carrier protein]-C-terminal-gamma-(L-ornithyl)-L-glutamate + H2O = [amino-group carrier protein]-C-terminal-L-glutamate + L-ornithine. The protein operates within amino-acid biosynthesis; L-lysine biosynthesis via AAA pathway; L-lysine from L-alpha-aminoadipate (Thermus route): step 5/5. Its pathway is amino-acid biosynthesis; L-arginine biosynthesis. Functionally, catalyzes the release of L-lysine from [LysW]-gamma-L-lysine and the release of L-ornithine from [LysW]-L-ornithine. This Sulfurisphaera tokodaii (strain DSM 16993 / JCM 10545 / NBRC 100140 / 7) (Sulfolobus tokodaii) protein is [LysW]-lysine/[LysW]-ornithine hydrolase.